The sequence spans 1231 residues: Chromosome-associated kinesin KIF4 (1231 aa).

One can recognise a Kinesin motor domain in the interval 9–337 (PVRVALRCRP…LRYADRARKI (329 aa)). 88 to 95 (GQTGSGKT) contributes to the ATP binding site. A coiled-coil region spans residues 351–1000 (ELNHLKQQVQ…IKQKLTLLQV (650 aa)). S395 is modified (phosphoserine). At T800 the chain carries Phosphothreonine. 3 positions are modified to phosphoserine: S802, S811, and S816. Residues 1001–1231 (ASKQKPHLTR…GCSPIQEESH (231 aa)) are globular. A disordered region spans residues 1189 to 1212 (HPELKSIASESQENKAIGKKKKRA). Phosphoserine is present on residues S1224 and S1230.

This sequence belongs to the TRAFAC class myosin-kinesin ATPase superfamily. Kinesin family. Chromokinesin subfamily. It depends on [2Fe-2S] cluster as a cofactor. The cofactor is [4Fe-4S] cluster. In terms of tissue distribution, expressed in pyramidal cells in juvenile hippocampus, granular cells in juvenile cerebellar cortex and in adult spleen.

The protein resides in the nucleus. The protein localises to the chromosome. Its subcellular location is the cytoplasm. It localises to the cytoskeleton. Its function is as follows. Iron-sulfur (Fe-S) cluster binding motor protein that has a role in chromosome segregation during mitosis. Required for mitotic chromosomal positioning and bipolar spindle stabilization. This is Chromosome-associated kinesin KIF4 (Kif4) from Mus musculus (Mouse).